A 149-amino-acid chain; its full sequence is UPF0179 protein MA_3685 (149 aa).

Belongs to the UPF0179 family.

This Methanosarcina acetivorans (strain ATCC 35395 / DSM 2834 / JCM 12185 / C2A) protein is UPF0179 protein MA_3685.